The following is a 250-amino-acid chain: Protein KPLCE (250 aa).

As to expression, skin-specific.

The sequence is that of Protein KPLCE from Homo sapiens (Human).